A 215-amino-acid chain; its full sequence is Probable GTP-binding protein EngB (215 aa).

Residues 30–204 (EGLEVAFAGR…QMVLAQWLGL (175 aa)) form the EngB-type G domain. GTP is bound by residues 38 to 45 (GRSNAGKS), 64 to 68 (GRTQL), 82 to 85 (DLPG), 149 to 152 (TKAD), and 182 to 185 (LFSA). Mg(2+) contacts are provided by serine 45 and threonine 66.

The protein belongs to the TRAFAC class TrmE-Era-EngA-EngB-Septin-like GTPase superfamily. EngB GTPase family. Mg(2+) is required as a cofactor.

In terms of biological role, necessary for normal cell division and for the maintenance of normal septation. The sequence is that of Probable GTP-binding protein EngB from Pseudomonas paraeruginosa (strain DSM 24068 / PA7) (Pseudomonas aeruginosa (strain PA7)).